Reading from the N-terminus, the 56-residue chain is UPF0434 protein CbuG_1535 (56 aa).

This sequence belongs to the UPF0434 family.

In Coxiella burnetii (strain CbuG_Q212) (Coxiella burnetii (strain Q212)), this protein is UPF0434 protein CbuG_1535.